The primary structure comprises 179 residues: Large ribosomal subunit protein uL5 (179 aa).

The protein belongs to the universal ribosomal protein uL5 family. Part of the 50S ribosomal subunit; part of the 5S rRNA/L5/L18/L25 subcomplex. Contacts the 5S rRNA and the P site tRNA. Forms a bridge to the 30S subunit in the 70S ribosome.

Functionally, this is one of the proteins that bind and probably mediate the attachment of the 5S RNA into the large ribosomal subunit, where it forms part of the central protuberance. In the 70S ribosome it contacts protein S13 of the 30S subunit (bridge B1b), connecting the 2 subunits; this bridge is implicated in subunit movement. Contacts the P site tRNA; the 5S rRNA and some of its associated proteins might help stabilize positioning of ribosome-bound tRNAs. This is Large ribosomal subunit protein uL5 from Natranaerobius thermophilus (strain ATCC BAA-1301 / DSM 18059 / JW/NM-WN-LF).